Consider the following 334-residue polypeptide: Cytosolic Fe-S cluster assembly factor NUBP1 homolog (334 aa).

Residues 1–24 form a disordered region; that stretch reads MSSAEVTAAAKPADAPEHCPGTAS. 4 residues coordinate [4Fe-4S] cluster: C19, C33, C36, and C42. 72–79 provides a ligand contact to ATP; the sequence is GKGGVGKS. [4Fe-4S] cluster-binding residues include C247 and C250.

Belongs to the Mrp/NBP35 ATP-binding proteins family. NUBP1/NBP35 subfamily. In terms of assembly, heterotetramer of 2 NUBP1 and 2 NUBP2 chains. Requires [4Fe-4S] cluster as cofactor.

The protein resides in the cytoplasm. In terms of biological role, component of the cytosolic iron-sulfur (Fe/S) protein assembly (CIA) machinery. Required for maturation of extramitochondrial Fe-S proteins. The NUBP1-NUBP2 heterotetramer forms a Fe-S scaffold complex, mediating the de novo assembly of an Fe-S cluster and its transfer to target apoproteins. This Culex quinquefasciatus (Southern house mosquito) protein is Cytosolic Fe-S cluster assembly factor NUBP1 homolog.